Reading from the N-terminus, the 355-residue chain is Methylthioribose-1-phosphate isomerase (355 aa).

Residues R53–A55, R96, and Q205 contribute to the substrate site. D246 acts as the Proton donor in catalysis. Residue N256–K257 coordinates substrate.

The protein belongs to the eIF-2B alpha/beta/delta subunits family. MtnA subfamily.

It catalyses the reaction 5-(methylsulfanyl)-alpha-D-ribose 1-phosphate = 5-(methylsulfanyl)-D-ribulose 1-phosphate. It participates in amino-acid biosynthesis; L-methionine biosynthesis via salvage pathway; L-methionine from S-methyl-5-thio-alpha-D-ribose 1-phosphate: step 1/6. Functionally, catalyzes the interconversion of methylthioribose-1-phosphate (MTR-1-P) into methylthioribulose-1-phosphate (MTRu-1-P). The sequence is that of Methylthioribose-1-phosphate isomerase from Thermosynechococcus vestitus (strain NIES-2133 / IAM M-273 / BP-1).